The following is a 139-amino-acid chain: Intrinsically disordered protein, expressed in pharynx 15 (139 aa).

Residues 1–12 are compositionally biased toward polar residues; the sequence is MNNNQGMYNTQT. The interval 1 to 98 is disordered; sequence MNNNQGMYNT…GSSTPSPQYS (98 aa). 2 stretches are compositionally biased toward low complexity: residues 13-41 and 49-98; these read TQGYGNNQGSYQNQMMYNNNNPQNTQTTT and QPQQ…PQYS.

This is Intrinsically disordered protein, expressed in pharynx 15 from Caenorhabditis elegans.